Reading from the N-terminus, the 315-residue chain is B3 domain-containing protein At1g05920 (315 aa).

The interval 24–129 (MISRDNQKKT…PQVASVPKSV (106 aa)) is disordered. 3 stretches are compositionally biased toward basic and acidic residues: residues 39-51 (VREEKGKRREEMI), 66-83 (KEGKGKRREEMISRDNRT), and 100-114 (FDHVPRGTREPHAYL). Residues 204 to 306 (INTVIQNDFL…ILCFALVPPT (103 aa)) constitute a DNA-binding region (TF-B3).

Its subcellular location is the nucleus. The protein is B3 domain-containing protein At1g05920 of Arabidopsis thaliana (Mouse-ear cress).